We begin with the raw amino-acid sequence, 391 residues long: GTPase Obg (391 aa).

Residues Met-1–Leu-159 enclose the Obg domain. Residues Ala-160–Glu-333 enclose the OBG-type G domain. GTP contacts are provided by residues Gly-166 to Ser-173, Phe-191 to Val-195, Asp-213 to Gly-216, Asn-283 to Asp-286, and Ser-314 to Ala-316. Residues Ser-173 and Thr-193 each contribute to the Mg(2+) site.

The protein belongs to the TRAFAC class OBG-HflX-like GTPase superfamily. OBG GTPase family. In terms of assembly, monomer. Requires Mg(2+) as cofactor.

It localises to the cytoplasm. Functionally, an essential GTPase which binds GTP, GDP and possibly (p)ppGpp with moderate affinity, with high nucleotide exchange rates and a fairly low GTP hydrolysis rate. Plays a role in control of the cell cycle, stress response, ribosome biogenesis and in those bacteria that undergo differentiation, in morphogenesis control. This chain is GTPase Obg, found in Actinobacillus pleuropneumoniae serotype 7 (strain AP76).